We begin with the raw amino-acid sequence, 403 residues long: Vacuole membrane protein 1 homolog (403 aa).

The stretch at 7-33 (IVLSNEKDIQLRIQQLEERKEKRKNVK) forms a coiled coil. 8 helical membrane passes run 65–85 (FLLF…YVPG), 102–122 (IWWV…LHTF), 150–170 (ANSF…WMIL), 175–195 (WAAL…YFVA), 240–260 (LIGN…NPLF), 263–283 (AGIT…ATFI), 294–314 (ACFV…SFIE), and 348–368 (VGLA…MSIV).

It belongs to the VMP1 family.

The protein resides in the membrane. Its subcellular location is the endoplasmic reticulum. It catalyses the reaction a 1,2-diacyl-sn-glycero-3-phospho-L-serine(in) = a 1,2-diacyl-sn-glycero-3-phospho-L-serine(out). It carries out the reaction cholesterol(in) = cholesterol(out). The enzyme catalyses a 1,2-diacyl-sn-glycero-3-phosphocholine(in) = a 1,2-diacyl-sn-glycero-3-phosphocholine(out). The catalysed reaction is a 1,2-diacyl-sn-glycero-3-phosphoethanolamine(in) = a 1,2-diacyl-sn-glycero-3-phosphoethanolamine(out). Functionally, phospholipid scramblase involved in lipid homeostasis and membrane dynamics processes. Required for autophagosome formation: participates in early stages of autophagosome biogenesis at the endoplasmic reticulum (ER) membrane by reequilibrating the leaflets of the ER as lipids are extracted. In addition to autophagy, involved in other processes in which phospholipid scramblase activity is required. This Dictyostelium discoideum (Social amoeba) protein is Vacuole membrane protein 1 homolog.